The primary structure comprises 564 residues: E3 ubiquitin-protein ligase RNF168 (564 aa).

An RING-type zinc finger spans residues 16 to 55 (CGICMEILVEPVTLPCNHTLCNPCFQSTVEKANLCCPFCR). Residue Ser70 is modified to Phosphoserine. The LR motif 1 motif lies at 110 to 128 (LSKPGELRREYEEEISKVE). Ser134 is modified (phosphoserine). The UMI motif signature appears at 143–151 (EEYIQRLLA). 2 disordered regions span residues 149–179 (LLAE…EELA) and 193–291 (NILA…QGPE). Basic and acidic residues predominate over residues 157 to 179 (EKRRTERRRSEMEEQLRGDEELA). The MIU motif 1 signature appears at 168–191 (MEEQLRGDEELARRLSTSINSNYE). Phosphoserine is present on Ser197. Lys210 is covalently cross-linked (Glycyl lysine isopeptide (Lys-Gly) (interchain with G-Cter in SUMO2)). Basic and acidic residues predominate over residues 242-259 (KTEHGEDMCKSKETDSSD). Positions 275–288 (PTHSPQTCPETQGQ) are enriched in polar residues. A phosphothreonine mark is found at Thr348 and Thr361. Phosphoserine is present on residues Ser413 and Ser414. The short motif at 438-461 (RHKQEEQDRLLALQLQKEADKEKM) is the MIU motif 2 element. The segment at 455-564 (EADKEKMVPN…QKSILQMFQR (110 aa)) is disordered. The LR motif 2 motif lies at 465-476 (RQKGSPDQYQLR). Over residues 466–480 (QKGSPDQYQLRTSSP) the composition is skewed to polar residues. Ser469 is subject to Phosphoserine. Residues 491 to 515 (NVKDRNSPKQTADRSKSQRSRKGEY) are compositionally biased toward basic and acidic residues. Composition is skewed to polar residues over residues 519 to 531 (FEST…NGTK) and 555 to 564 (QKSILQMFQR). Residue Lys524 forms a Glycyl lysine isopeptide (Lys-Gly) (interchain with G-Cter in SUMO2) linkage.

It belongs to the RNF168 family. Monomer. Interacts with UBE2N/UBC13. Sumoylated with SUMO1 by PIAS4 in response to double-strand breaks (DSBs). Post-translationally, ubiquitinated.

Its subcellular location is the nucleus. It catalyses the reaction S-ubiquitinyl-[E2 ubiquitin-conjugating enzyme]-L-cysteine + [acceptor protein]-L-lysine = [E2 ubiquitin-conjugating enzyme]-L-cysteine + N(6)-ubiquitinyl-[acceptor protein]-L-lysine.. The protein operates within protein modification; protein ubiquitination. Functionally, E3 ubiquitin-protein ligase required for accumulation of repair proteins to sites of DNA damage. Acts with UBE2N/UBC13 to amplify the RNF8-dependent histone ubiquitination. Recruited to sites of DNA damage at double-strand breaks (DSBs) by binding to ubiquitinated histone H2A and H2AX and amplifies the RNF8-dependent H2A ubiquitination, promoting the formation of 'Lys-63'-linked ubiquitin conjugates. This leads to concentrate ubiquitinated histones H2A and H2AX at DNA lesions to the threshold required for recruitment of TP53BP1 and BRCA1. Also recruited at DNA interstrand cross-links (ICLs) sites and promotes accumulation of 'Lys-63'-linked ubiquitination of histones H2A and H2AX, leading to recruitment of FAAP20 and Fanconi anemia (FA) complex, followed by interstrand cross-link repair. H2A ubiquitination also mediates the ATM-dependent transcriptional silencing at regions flanking DSBs in cis, a mechanism to avoid collision between transcription and repair intermediates. Also involved in class switch recombination in immune system, via its role in regulation of DSBs repair. Following DNA damage, promotes the ubiquitination and degradation of JMJD2A/KDM4A in collaboration with RNF8, leading to unmask H4K20me2 mark and promote the recruitment of TP53BP1 at DNA damage sites. Not able to initiate 'Lys-63'-linked ubiquitination in vitro; possibly due to partial occlusion of the UBE2N/UBC13-binding region. Catalyzes monoubiquitination of 'Lys-13' and 'Lys-15' of nucleosomal histone H2A (H2AK13Ub and H2AK15Ub, respectively). The chain is E3 ubiquitin-protein ligase RNF168 from Rattus norvegicus (Rat).